A 344-amino-acid polypeptide reads, in one-letter code: uncharacterized protein (344 aa).

The protein belongs to the glycosyltransferase 28 family.

This is an uncharacterized protein from Methanopyrus kandleri (strain AV19 / DSM 6324 / JCM 9639 / NBRC 100938).